Consider the following 477-residue polypeptide: SH3 domain-binding protein 5 homolog (477 aa).

Residues 12-95 (QIQIELENLN…AAVKFQRANE (84 aa)) adopt a coiled-coil conformation. Ser113 and Ser115 each carry phosphoserine. A coiled-coil region spans residues 122–221 (NAWQEMLNHA…YSTALRNLER (100 aa)). Disordered stretches follow at residues 224 to 258 (EDIH…ALPS) and 276 to 306 (GSQM…ETGA). A compositionally biased stretch (acidic residues) spans 291–305 (ETEDEEDACDYDETG).

It belongs to the SH3BP5 family.

In Drosophila melanogaster (Fruit fly), this protein is SH3 domain-binding protein 5 homolog (pcs).